The sequence spans 473 residues: Photosystem II CP43 reaction center protein (473 aa).

The propeptide occupies 1 to 14 (MKTLYSLRRFYPVE). Thr-15 is modified (N-acetylthreonine). Residue Thr-15 is modified to Phosphothreonine. 5 helical membrane-spanning segments follow: residues 69 to 93 (LFEV…PHLA), 134 to 155 (LLGP…KDRN), 178 to 200 (KALY…RKIT), 255 to 275 (KPFA…LSYS), and 291 to 312 (WFNN…ASQA). Glu-367 contacts [CaMn4O5] cluster. A helical transmembrane segment spans residues 447-471 (RARAAAAGFEKGIDRDFEPVLSMTP).

It belongs to the PsbB/PsbC family. PsbC subfamily. PSII is composed of 1 copy each of membrane proteins PsbA, PsbB, PsbC, PsbD, PsbE, PsbF, PsbH, PsbI, PsbJ, PsbK, PsbL, PsbM, PsbT, PsbX, PsbY, PsbZ, Psb30/Ycf12, at least 3 peripheral proteins of the oxygen-evolving complex and a large number of cofactors. It forms dimeric complexes. It depends on Binds multiple chlorophylls and provides some of the ligands for the Ca-4Mn-5O cluster of the oxygen-evolving complex. It may also provide a ligand for a Cl- that is required for oxygen evolution. PSII binds additional chlorophylls, carotenoids and specific lipids. as a cofactor.

The protein resides in the plastid. The protein localises to the chloroplast thylakoid membrane. Its function is as follows. One of the components of the core complex of photosystem II (PSII). It binds chlorophyll and helps catalyze the primary light-induced photochemical processes of PSII. PSII is a light-driven water:plastoquinone oxidoreductase, using light energy to abstract electrons from H(2)O, generating O(2) and a proton gradient subsequently used for ATP formation. This Panax ginseng (Korean ginseng) protein is Photosystem II CP43 reaction center protein.